The following is a 448-amino-acid chain: Bifunctional protein GlmU (448 aa).

The tract at residues 1–232 (MTARSSLTIV…EDEVRGINTK (232 aa)) is pyrophosphorylase. UDP-N-acetyl-alpha-D-glucosamine is bound by residues 11–14 (LAAG), lysine 25, glutamine 78, and 83–84 (GT). Aspartate 108 is a Mg(2+) binding site. Positions 144, 158, 173, and 230 each coordinate UDP-N-acetyl-alpha-D-glucosamine. Residue asparagine 230 participates in Mg(2+) binding. The interval 233 to 253 (AQLAQAEAAMQARLRQAAMDA) is linker. The interval 254-448 (GVTLIAPETV…FRNAKLRQTK (195 aa)) is N-acetyltransferase. Residues arginine 319 and lysine 337 each contribute to the UDP-N-acetyl-alpha-D-glucosamine site. Catalysis depends on histidine 349, which acts as the Proton acceptor. The UDP-N-acetyl-alpha-D-glucosamine site is built by tyrosine 352 and asparagine 363. Acetyl-CoA-binding positions include alanine 366, 372–373 (NY), serine 409, and arginine 426. The disordered stretch occupies residues 427 to 448 (SPQTTKEGAAARFRNAKLRQTK).

The protein in the N-terminal section; belongs to the N-acetylglucosamine-1-phosphate uridyltransferase family. It in the C-terminal section; belongs to the transferase hexapeptide repeat family. In terms of assembly, homotrimer. Mg(2+) is required as a cofactor.

It localises to the cytoplasm. The catalysed reaction is alpha-D-glucosamine 1-phosphate + acetyl-CoA = N-acetyl-alpha-D-glucosamine 1-phosphate + CoA + H(+). It catalyses the reaction N-acetyl-alpha-D-glucosamine 1-phosphate + UTP + H(+) = UDP-N-acetyl-alpha-D-glucosamine + diphosphate. Its pathway is nucleotide-sugar biosynthesis; UDP-N-acetyl-alpha-D-glucosamine biosynthesis; N-acetyl-alpha-D-glucosamine 1-phosphate from alpha-D-glucosamine 6-phosphate (route II): step 2/2. It participates in nucleotide-sugar biosynthesis; UDP-N-acetyl-alpha-D-glucosamine biosynthesis; UDP-N-acetyl-alpha-D-glucosamine from N-acetyl-alpha-D-glucosamine 1-phosphate: step 1/1. The protein operates within bacterial outer membrane biogenesis; LPS lipid A biosynthesis. Catalyzes the last two sequential reactions in the de novo biosynthetic pathway for UDP-N-acetylglucosamine (UDP-GlcNAc). The C-terminal domain catalyzes the transfer of acetyl group from acetyl coenzyme A to glucosamine-1-phosphate (GlcN-1-P) to produce N-acetylglucosamine-1-phosphate (GlcNAc-1-P), which is converted into UDP-GlcNAc by the transfer of uridine 5-monophosphate (from uridine 5-triphosphate), a reaction catalyzed by the N-terminal domain. This Bradyrhizobium sp. (strain ORS 278) protein is Bifunctional protein GlmU.